The chain runs to 501 residues: MEFSFSSPALYIVYFLLFFVVRQLLKPKSKKKLPPGPRTLPLIGNLHQLSGPLPHRTLKNLSDKHGPLMHVKMGERSAIIVSDARMAKIVLHNNGLAVADRSVNTVASIMTYNSLGVTFAQYGDYLTKLRQIYTLELLSQKKVRSFYSCFEDELDTFVKSIKSNVGQPMVLYEKASAYLYATICRTIFGSVCKEKEKMIKIVKKTSLLSGTPLRLEDLFPSMSIFCRFSKTLNQLRGLLQEMDDILEEIIVEREKASEVSKEAKDDEDMLSVLLRHKWYNPSGAKFRITNADIKAIIFELILAATLSVADVTEWAMVEILRDPKSLKKVYEEVRGICKEKKRVTGYDVEKMEFMRLCVKESTRIHPAAPLLVPRECREDFEVDGYTVPKGAWVITNCWAVQMDPTVWPEPEKFDPERYIRNPMDFYGSNFELIPFGTGRRGCPGILYGVTNAEFMLAAMFYHFDWEIADGKKPEEIDLTEDFGAGCIMKYPLKLVPHLVND.

A helical membrane pass occupies residues 1 to 21 (MEFSFSSPALYIVYFLLFFVV). N-linked (GlcNAc...) asparagine glycosylation occurs at Asn60. Residue Cys442 coordinates heme.

Belongs to the cytochrome P450 family. Heme is required as a cofactor. Expressed in leaf epidermis. Also present in the leaf internal phloem-associated parenchyma (IPAP) inside the mesophyll.

The protein localises to the membrane. It catalyses the reaction (19E)-geissoschizine + reduced [NADPH--hemoprotein reductase] + O2 = akuammicine + formate + oxidized [NADPH--hemoprotein reductase] + H2O + H(+). The catalysed reaction is (19E)-geissoschizine + reduced [NADPH--hemoprotein reductase] + O2 = 3,17-didehydrostemmadenine + oxidized [NADPH--hemoprotein reductase] + 2 H2O. The protein operates within alkaloid biosynthesis. Component of the seco-iridoid and derivatives monoterpenoid indole alkaloids (MIAs, e.g. vincristine, quinine, and strychnine) biosynthesis pathway. Catalyzes the oxidation of 19E-geissoschizine to produce a short-lived MIA unstable intermediate which can be spontaneously converted into akuammicine or oxidized by Redox1 and Redox2 to produce stemmadenine and 16S/R-deshydroxymethylstemmadenine (16S/R-DHS). The sequence is that of Geissoschizine oxidase from Catharanthus roseus (Madagascar periwinkle).